Consider the following 347-residue polypeptide: Protein RecA (347 aa).

65–72 (GPESSGKT) serves as a coordination point for ATP.

This sequence belongs to the RecA family.

The protein localises to the cytoplasm. Can catalyze the hydrolysis of ATP in the presence of single-stranded DNA, the ATP-dependent uptake of single-stranded DNA by duplex DNA, and the ATP-dependent hybridization of homologous single-stranded DNAs. It interacts with LexA causing its activation and leading to its autocatalytic cleavage. In Marinobacter nauticus (strain ATCC 700491 / DSM 11845 / VT8) (Marinobacter aquaeolei), this protein is Protein RecA.